A 203-amino-acid chain; its full sequence is 22.3 kDa class VI heat shock protein (203 aa).

The 118-residue stretch at 86–203 (ALRRGARTTV…DAHQAAAATA (118 aa)) folds into the sHSP domain.

Belongs to the small heat shock protein (HSP20) family. May form oligomeric structures.

It localises to the cytoplasm. This is 22.3 kDa class VI heat shock protein (HSP22.3) from Oryza sativa subsp. japonica (Rice).